Here is a 211-residue protein sequence, read N- to C-terminus: External core antigen (211 aa).

Positions 1 to 19 (MHLFHLCLIILCSCPTVQA) are cleaved as a signal peptide. The segment at 25–27 (GWL) is HBEAG. Residues 165-211 (NAPILSTLPETTVVRRRRPSGRRTPSPRRRRSQSPRRRRSQSPASSC) are disordered. Positions 178–204 (VRRRRPSGRRTPSPRRRRSQSPRRRRS) are enriched in basic residues. One copy of the 1; half-length repeat lies at 183-189 (PSGRRTP). Residues 183–205 (PSGRRTPSPRRRRSQSPRRRRSQ) are 3 X 8 AA repeats of S-P-R-R-R-R-S-Q. Positions 183-211 (PSGRRTPSPRRRRSQSPRRRRSQSPASSC) are excised as a propeptide. Tandem repeats lie at residues 190-197 (SPRRRRSQ) and 198-205 (SPRRRRSQ).

Belongs to the orthohepadnavirus precore antigen family. In terms of assembly, homodimerizes. Post-translationally, phosphorylated. In terms of processing, cleaved by host furin.

It localises to the secreted. The protein resides in the host nucleus. In terms of biological role, may regulate immune response to the intracellular capsid in acting as a T-cell tolerogen, by having an immunoregulatory effect which prevents destruction of infected cells by cytotoxic T-cells. This immune regulation may predispose to chronicity during perinatal infections and prevent severe liver injury during adult infections. The sequence is that of External core antigen from Woolly monkey hepatitis B virus (isolate Louisville) (WMHBV).